The following is a 318-amino-acid chain: Inner membrane protein YbhN (318 aa).

The Periplasmic segment spans residues methionine 1–lysine 13. The helical transmembrane segment at isoleucine 14–valine 34 threads the bilayer. The Cytoplasmic portion of the chain corresponds to aspartate 35 to alanine 50. A helical transmembrane segment spans residues leucine 51–leucine 71. The Periplasmic segment spans residues alanine 72 to valine 85. A helical transmembrane segment spans residues methionine 86–isoleucine 106. At glycine 107–arginine 125 the chain is on the cytoplasmic side. The chain crosses the membrane as a helical span at residues isoleucine 126–phenylalanine 146. Residues threonine 147–arginine 165 are Periplasmic-facing. Residues isoleucine 166–lysine 186 form a helical membrane-spanning segment. Topologically, residues histidine 187–alanine 205 are cytoplasmic. The chain crosses the membrane as a helical span at residues leucine 206–leucine 226. Residues leucine 227–tyrosine 233 are Periplasmic-facing. 2 helical membrane-spanning segments follow: residues phenylalanine 234–alanine 254 and glycine 255–glycine 275. The Periplasmic segment spans residues threonine 276 to isoleucine 277. The helical transmembrane segment at isoleucine 278–isoleucine 298 threads the bilayer. The Cytoplasmic portion of the chain corresponds to cysteine 299 to methionine 318.

It to Synechocystis PCC 6803 slr0712.

It localises to the cell inner membrane. This is Inner membrane protein YbhN (ybhN) from Escherichia coli (strain K12).